A 157-amino-acid chain; its full sequence is ATP synthase subunit b (157 aa).

A helical membrane pass occupies residues 1–21 (MHFLDESFWLAISFIIFVYLI).

The protein belongs to the ATPase B chain family. F-type ATPases have 2 components, F(1) - the catalytic core - and F(0) - the membrane proton channel. F(1) has five subunits: alpha(3), beta(3), gamma(1), delta(1), epsilon(1). F(0) has three main subunits: a(1), b(2) and c(10-14). The alpha and beta chains form an alternating ring which encloses part of the gamma chain. F(1) is attached to F(0) by a central stalk formed by the gamma and epsilon chains, while a peripheral stalk is formed by the delta and b chains.

It is found in the cell inner membrane. Functionally, f(1)F(0) ATP synthase produces ATP from ADP in the presence of a proton or sodium gradient. F-type ATPases consist of two structural domains, F(1) containing the extramembraneous catalytic core and F(0) containing the membrane proton channel, linked together by a central stalk and a peripheral stalk. During catalysis, ATP synthesis in the catalytic domain of F(1) is coupled via a rotary mechanism of the central stalk subunits to proton translocation. Component of the F(0) channel, it forms part of the peripheral stalk, linking F(1) to F(0). The sequence is that of ATP synthase subunit b from Rickettsia bellii (strain RML369-C).